The sequence spans 266 residues: Indole-3-glycerol phosphate synthase (266 aa).

This sequence belongs to the TrpC family.

The enzyme catalyses 1-(2-carboxyphenylamino)-1-deoxy-D-ribulose 5-phosphate + H(+) = (1S,2R)-1-C-(indol-3-yl)glycerol 3-phosphate + CO2 + H2O. It functions in the pathway amino-acid biosynthesis; L-tryptophan biosynthesis; L-tryptophan from chorismate: step 4/5. The protein is Indole-3-glycerol phosphate synthase of Variovorax paradoxus (strain S110).